Reading from the N-terminus, the 63-residue chain is MDQDVAEEILNKEYEVVYEGKRFLLKPAKAWVLQPPGKPGVIVALFKLPNGKTVRKVIARLPP.

The protein belongs to the Cren7 family. In terms of assembly, monomer. In terms of processing, methylated at multiple sites, to varying extents.

Its subcellular location is the chromosome. It is found in the cytoplasm. Its function is as follows. A chromatin protein, binds double-stranded DNA without sequence specificity. Constrains negative DNA supercoils. The protein is Chromatin protein Cren7 of Pyrobaculum calidifontis (strain DSM 21063 / JCM 11548 / VA1).